The sequence spans 152 residues: Small ribosomal subunit protein uS15 (152 aa).

Belongs to the universal ribosomal protein uS15 family. In terms of assembly, part of the 30S ribosomal subunit.

This Methanocorpusculum labreanum (strain ATCC 43576 / DSM 4855 / Z) protein is Small ribosomal subunit protein uS15.